Consider the following 120-residue polypeptide: Large ribosomal subunit protein uL18 (120 aa).

This sequence belongs to the universal ribosomal protein uL18 family. As to quaternary structure, part of the 50S ribosomal subunit; part of the 5S rRNA/L5/L18/L25 subcomplex. Contacts the 5S and 23S rRNAs.

Its function is as follows. This is one of the proteins that bind and probably mediate the attachment of the 5S RNA into the large ribosomal subunit, where it forms part of the central protuberance. The protein is Large ribosomal subunit protein uL18 of Sinorhizobium medicae (strain WSM419) (Ensifer medicae).